A 72-amino-acid polypeptide reads, in one-letter code: Aurein-2.2 (72 aa).

Positions 1-22 (MAFLKKSLFLVLFLGLVSLSIC) are cleaved as a signal peptide. Residues 23-49 (EKEKRQNEEDEDENEAANHEEGSEEKR) constitute a propeptide that is removed on maturation. The disordered stretch occupies residues 27 to 47 (RQNEEDEDENEAANHEEGSEE). Over residues 38-47 (AANHEEGSEE) the composition is skewed to basic and acidic residues. L65 is subject to Leucine amide. A propeptide spanning residues 69-72 (NDLE) is cleaved from the precursor.

Post-translationally, amidation is essential for antibacterial activity against Gram-positive bacteria. In terms of tissue distribution, expressed by the skin dorsal glands.

The protein resides in the secreted. Its subcellular location is the target cell membrane. Functionally, amphipathic alpha-helical antimicrobial peptide with weak to moderate activity against Gram-positive bacteria, and no activity against Gram-negative bacteria. Probably acts by disturbing membrane functions with its amphipathic structure. Strongly inhibits the formation of NO by neuronal nitric oxide synthase (nNOS) at micromolar concentrations. Acts by a non-competitive mechanism, probably by binding to calcium/calmodulin and as a consequence blocking calmodulin attachment to nNOS. In Ranoidea aurea (Green and golden bell frog), this protein is Aurein-2.2.